The following is a 283-amino-acid chain: Bifunctional protein FolD (283 aa).

Residues 165 to 167, Ser-190, and Ile-231 each bind NADP(+); that span reads GRS.

This sequence belongs to the tetrahydrofolate dehydrogenase/cyclohydrolase family. As to quaternary structure, homodimer.

It carries out the reaction (6R)-5,10-methylene-5,6,7,8-tetrahydrofolate + NADP(+) = (6R)-5,10-methenyltetrahydrofolate + NADPH. It catalyses the reaction (6R)-5,10-methenyltetrahydrofolate + H2O = (6R)-10-formyltetrahydrofolate + H(+). It functions in the pathway one-carbon metabolism; tetrahydrofolate interconversion. In terms of biological role, catalyzes the oxidation of 5,10-methylenetetrahydrofolate to 5,10-methenyltetrahydrofolate and then the hydrolysis of 5,10-methenyltetrahydrofolate to 10-formyltetrahydrofolate. The sequence is that of Bifunctional protein FolD from Janthinobacterium sp. (strain Marseille) (Minibacterium massiliensis).